Here is a 273-residue protein sequence, read N- to C-terminus: Gap junction beta-5 protein (273 aa).

The Cytoplasmic segment spans residues 1-20 (MNWSIFEGLLSGVNKYSTAF). The helical transmembrane segment at 21-40 (GRIWLSLVFIFRVLVYLVTA) threads the bilayer. The Extracellular segment spans residues 41–75 (ERVWSDDHKDFDCNTRQPGCSNVCFDEFFPVSHVR). A helical membrane pass occupies residues 76–98 (LWALQLILVTCPSLLVVMHVAYR). Residues 99–126 (EVQEKRHREAHGENSGRLYLNPGKKRGG) lie on the Cytoplasmic side of the membrane. Residues 127–149 (LWWTYVCSLVFKASVDIAFLYVF) traverse the membrane as a helical segment. The Extracellular segment spans residues 150–187 (HSFYPKYILPPVVKCHADPCPNIVDCFISKPSEKNIFT). The helical transmembrane segment at 188–210 (LFMVATAAICILLNLVELIYLVS) threads the bilayer. Residues 211 to 273 (KRCHECLAAR…PRDHVKKTIL (63 aa)) are Cytoplasmic-facing.

Belongs to the connexin family. Beta-type (group I) subfamily. As to quaternary structure, a connexon is composed of a hexamer of connexins.

Its subcellular location is the cell membrane. It localises to the cell junction. The protein localises to the gap junction. In terms of biological role, one gap junction consists of a cluster of closely packed pairs of transmembrane channels, the connexons, through which materials of low MW diffuse from one cell to a neighboring cell. The chain is Gap junction beta-5 protein (GJB5) from Homo sapiens (Human).